The chain runs to 365 residues: Probable dual-specificity RNA methyltransferase RlmN (365 aa).

Glu-108 (proton acceptor) is an active-site residue. A Radical SAM core domain is found at 114 to 347; it reads HNYGNSVCVT…VTIRREHGHD (234 aa). Cys-121 and Cys-352 form a disulfide bridge. 3 residues coordinate [4Fe-4S] cluster: Cys-128, Cys-132, and Cys-135. S-adenosyl-L-methionine contacts are provided by residues 178 to 179, Ser-210, 233 to 235, and Asn-309; these read GE and SLH. Cys-352 acts as the S-methylcysteine intermediate in catalysis.

Belongs to the radical SAM superfamily. RlmN family. [4Fe-4S] cluster is required as a cofactor.

The protein localises to the cytoplasm. The catalysed reaction is adenosine(2503) in 23S rRNA + 2 reduced [2Fe-2S]-[ferredoxin] + 2 S-adenosyl-L-methionine = 2-methyladenosine(2503) in 23S rRNA + 5'-deoxyadenosine + L-methionine + 2 oxidized [2Fe-2S]-[ferredoxin] + S-adenosyl-L-homocysteine. The enzyme catalyses adenosine(37) in tRNA + 2 reduced [2Fe-2S]-[ferredoxin] + 2 S-adenosyl-L-methionine = 2-methyladenosine(37) in tRNA + 5'-deoxyadenosine + L-methionine + 2 oxidized [2Fe-2S]-[ferredoxin] + S-adenosyl-L-homocysteine. Its function is as follows. Specifically methylates position 2 of adenine 2503 in 23S rRNA and position 2 of adenine 37 in tRNAs. The protein is Probable dual-specificity RNA methyltransferase RlmN of Geobacillus kaustophilus (strain HTA426).